A 286-amino-acid chain; its full sequence is Small ribosomal subunit protein uS2 (286 aa).

The interval 213–286 is disordered; sequence EEQAQNNKWA…GAQEGGEWGS (74 aa). Positions 227 to 241 are enriched in low complexity; that stretch reads SPALSAAVPSSAAPV. Residues 244 to 270 show a composition bias toward polar residues; it reads WSSSPSKETTEWGASNTAAAAKSSWSN. A compositionally biased stretch (gly residues) spans 274–286; the sequence is GEWGAQEGGEWGS.

This sequence belongs to the universal ribosomal protein uS2 family. In terms of assembly, component of the small ribosomal subunit. Mature ribosomes consist of a small (40S) and a large (60S) subunit. The 40S subunit contains about 33 different proteins and 1 molecule of RNA (18S). The 60S subunit contains about 49 different proteins and 3 molecules of RNA (28S, 5.8S and 5S). Interacts with ribosomal protein S21.

Its subcellular location is the cytoplasm. In terms of biological role, required for the assembly and/or stability of the 40S ribosomal subunit. Required for the processing of the 20S rRNA-precursor to mature 18S rRNA in a late step of the maturation of 40S ribosomal subunits. The sequence is that of Small ribosomal subunit protein uS2 from Trichoplax adhaerens (Trichoplax reptans).